The primary structure comprises 539 residues: Dopamine receptor 2 (539 aa).

Topologically, residues 1-113 (MVDDNGSSPE…LPNDRVGLLA (113 aa)) are extracellular. N-linked (GlcNAc...) asparagine glycosylation is found at Asn5, Asn31, Asn47, and Asn68. Residues 114–134 (FLFLFSFATVFGNSLVILAVI) form a helical membrane-spanning segment. At 135-145 (RERYLHTATNY) the chain is on the cytoplasmic side. Residues 146–166 (FITSLAVADCLVGLVVMPFSA) form a helical membrane-spanning segment. Residues 167–189 (LYEVLENTWFFGTDWCDIWRSLD) are Extracellular-facing. Cys182 and Cys261 form a disulfide bridge. A helical membrane pass occupies residues 190 to 206 (VLFSTASILNLCVISLD). At 207 to 227 (RYWAITDPFSYPMRMTVKRAA) the chain is on the cytoplasmic side. Residues 228-248 (GLIAAVWICSSAISFPAIVWW) traverse the membrane as a helical segment. The Extracellular segment spans residues 249-266 (RAARDGEMPAYKCTFTEH). Residues 267-287 (LGYLVFSSTISFYLPLLVMVF) traverse the membrane as a helical segment. Residues 288–420 (TYCRIYRAAV…FAKEKKAAKT (133 aa)) are Cytoplasmic-facing. The interval 326–387 (GGTTRDQQNQ…EPDDEPLSAL (62 aa)) is disordered. Positions 337–352 (SGGGGGGGGGGGGGGS) are enriched in gly residues. Residues 356 to 367 (SHSHSHHHHHNH) show a composition bias toward basic residues. The chain crosses the membrane as a helical span at residues 421–441 (LGIVMGVFIICWLPFFVVNLL). Residues 442 to 453 (SGFCIECIEHEE) are Extracellular-facing. The helical transmembrane segment at 454 to 474 (IVSAIVTWLGWINSCMNPVIY) threads the bilayer. The Cytoplasmic portion of the chain corresponds to 475-539 (ACWSRDFRRA…RHNSCEQTYI (65 aa)). S-palmitoyl cysteine attachment occurs at residues Cys492 and Cys493.

Belongs to the G-protein coupled receptor 1 family. Expressed in both central and peripheral nervous systems.

It localises to the cell membrane. Functionally, receptor for dopamine. The activity of this receptor is mediated by G proteins which activate adenylyl cyclase. Also capable of generating a calcium signal. In terms of antagonist responses, would be classed with the D1-like dopamine receptor group. This receptor is an attractive candidate for initiating biochemical cascades underlying olfactory learning. In Drosophila melanogaster (Fruit fly), this protein is Dopamine receptor 2 (Dop1R2).